The sequence spans 140 residues: Nucleoside diphosphate kinase (140 aa).

Residues lysine 11, phenylalanine 59, arginine 87, threonine 93, arginine 104, and asparagine 114 each coordinate ATP. The Pros-phosphohistidine intermediate role is filled by histidine 117.

This sequence belongs to the NDK family. In terms of assembly, homotetramer. It depends on Mg(2+) as a cofactor.

Its subcellular location is the cytoplasm. The enzyme catalyses a 2'-deoxyribonucleoside 5'-diphosphate + ATP = a 2'-deoxyribonucleoside 5'-triphosphate + ADP. It catalyses the reaction a ribonucleoside 5'-diphosphate + ATP = a ribonucleoside 5'-triphosphate + ADP. Functionally, major role in the synthesis of nucleoside triphosphates other than ATP. The ATP gamma phosphate is transferred to the NDP beta phosphate via a ping-pong mechanism, using a phosphorylated active-site intermediate. This is Nucleoside diphosphate kinase from Brucella anthropi (strain ATCC 49188 / DSM 6882 / CCUG 24695 / JCM 21032 / LMG 3331 / NBRC 15819 / NCTC 12168 / Alc 37) (Ochrobactrum anthropi).